The primary structure comprises 488 residues: Malonate-semialdehyde dehydrogenase (488 aa).

Alanine 150, phenylalanine 152, lysine 176, glutamate 179, arginine 180, serine 229, and threonine 251 together coordinate NAD(+). Cysteine 284 functions as the Nucleophile in the catalytic mechanism. Residue glutamate 382 coordinates NAD(+).

It belongs to the aldehyde dehydrogenase family. IolA subfamily. Homotetramer.

The enzyme catalyses 3-oxopropanoate + NAD(+) + CoA + H2O = hydrogencarbonate + acetyl-CoA + NADH + H(+). It carries out the reaction 2-methyl-3-oxopropanoate + NAD(+) + CoA + H2O = propanoyl-CoA + hydrogencarbonate + NADH + H(+). It functions in the pathway polyol metabolism; myo-inositol degradation into acetyl-CoA; acetyl-CoA from myo-inositol: step 7/7. Its function is as follows. Catalyzes the oxidation of malonate semialdehyde (MSA) and methylmalonate semialdehyde (MMSA) into acetyl-CoA and propanoyl-CoA, respectively. Is involved in a myo-inositol catabolic pathway. Bicarbonate, and not CO2, is the end-product of the enzymatic reaction. This Listeria monocytogenes serovar 1/2a (strain ATCC BAA-679 / EGD-e) protein is Malonate-semialdehyde dehydrogenase.